An 855-amino-acid polypeptide reads, in one-letter code: Replication factor C small subunit (855 aa).

In terms of domain architecture, DOD-type homing endonuclease spans 185–308; that stretch reads WLGYFLGGGY…IAYALAGFGI (124 aa).

It belongs to the activator 1 small subunits family. RfcS subfamily. As to quaternary structure, heteromultimer composed of small subunits (RfcS) and large subunits (RfcL). Post-translationally, this protein undergoes a protein self splicing that involves a post-translational excision of the intervening region (intein) followed by peptide ligation.

Part of the RFC clamp loader complex which loads the PCNA sliding clamp onto DNA. The protein is Replication factor C small subunit (rfcS) of Pyrococcus horikoshii (strain ATCC 700860 / DSM 12428 / JCM 9974 / NBRC 100139 / OT-3).